Here is a 101-residue protein sequence, read N- to C-terminus: uncharacterized protein (101 aa).

This is an uncharacterized protein from Enterobacteria phage T3 (Bacteriophage T3).